The sequence spans 41 residues: Photosystem I reaction center subunit IX (41 aa).

Residues 7-27 (YLSTAPVVALIWFTFTAGLLI) traverse the membrane as a helical segment.

Belongs to the PsaJ family.

The protein resides in the plastid. Its subcellular location is the chloroplast thylakoid membrane. May help in the organization of the PsaE and PsaF subunits. In Pleurastrum terricola (Filamentous green alga), this protein is Photosystem I reaction center subunit IX.